We begin with the raw amino-acid sequence, 352 residues long: MSKQPSLSYKDAGVDIDAGEALVERIKSVAKRTARPEVMGGLGGFGALCEIPAGYKQPVLVSGTDGVGTKLRLALNLNKHDSIGIDLVAMCVNDLVVCGAEPLFFLDYYATGKLNVDTAAQVVTGIGAGCELSGCSLVGGETAEMPGMYEGEDYDLAGFCVGVVEKAEIIDGSKVAAGDALLALPSSGPHSNGYSLIRKIIEVSGADIESIQLDGKPLTDLLMAPTRIYVKPLLKLIKDTGAVKAMAHITGGGLLDNIPRVLPKGAQAVVDVASWQRPAVFDWLQEKGNVDEHEMHRVLNCGVGMVICVAQDQVENALKVLREAGEQPWVIGQIATAAEGAAQVELKNLKAH.

Belongs to the AIR synthase family.

It is found in the cytoplasm. The enzyme catalyses 2-formamido-N(1)-(5-O-phospho-beta-D-ribosyl)acetamidine + ATP = 5-amino-1-(5-phospho-beta-D-ribosyl)imidazole + ADP + phosphate + H(+). Its pathway is purine metabolism; IMP biosynthesis via de novo pathway; 5-amino-1-(5-phospho-D-ribosyl)imidazole from N(2)-formyl-N(1)-(5-phospho-D-ribosyl)glycinamide: step 2/2. This Pseudomonas fluorescens (strain ATCC BAA-477 / NRRL B-23932 / Pf-5) protein is Phosphoribosylformylglycinamidine cyclo-ligase.